The chain runs to 148 residues: Ubiquitin-conjugating enzyme E2-17 kDa (148 aa).

The UBC core domain maps to Met-1–Met-147. Cys-85 (glycyl thioester intermediate) is an active-site residue.

It belongs to the ubiquitin-conjugating enzyme family.

The catalysed reaction is S-ubiquitinyl-[E1 ubiquitin-activating enzyme]-L-cysteine + [E2 ubiquitin-conjugating enzyme]-L-cysteine = [E1 ubiquitin-activating enzyme]-L-cysteine + S-ubiquitinyl-[E2 ubiquitin-conjugating enzyme]-L-cysteine.. It functions in the pathway protein modification; protein ubiquitination. In terms of biological role, catalyzes the covalent attachment of ubiquitin to other proteins. Mediates the selective degradation of short-lived and abnormal proteins. This is Ubiquitin-conjugating enzyme E2-17 kDa from Solanum lycopersicum (Tomato).